Reading from the N-terminus, the 2259-residue chain is Golgin subfamily A member 4 (2259 aa).

Positions 1–54 (MFKKLKQKISEEQQQLQQALAPAQASSSSSTPTRTRSRTSSFTDQLDDATPNRE) are disordered. Phosphoserine is present on S10. Residues 12-41 (EQQQLQQALAPAQASSSSSTPTRTRSRTSS) are compositionally biased toward low complexity. At T39 the chain carries Phosphothreonine. Phosphoserine is present on residues S41, S104, and S111. Positions 165–235 (SLSREQLLQR…EELQMDQQAK (71 aa)) are interaction with MACF1. Positions 167–2182 (SREQLLQRLR…SYEKSVCAAA (2016 aa)) form a coiled coil. Basic and acidic residues-rich tracts occupy residues 1932 to 1946 (LEDRPEENSKSHVIE) and 1954 to 1977 (DGRHSDLESKLAGSEREKQKLSKE). The segment at 1932-1977 (LEDRPEENSKSHVIESKLGTPMDGRHSDLESKLAGSEREKQKLSKE) is disordered. Residues 2199-2246 (LFGEPTEFEYLRKVLFEYMMGRETKTMAKVITTVLRFPDDQAQKILER) enclose the GRIP domain.

Homodimer. Interacts with GTP-bound ARL1 and ARL3. Interacts with MACF1. Directly interacts with TBC1D23. Interacts with FAM91A1; this interaction may be mediated by TBC1D23. In terms of tissue distribution, expressed in the head of epididymal sperm but not in testicular sperm (at protein level).

Its subcellular location is the cytoplasm. The protein localises to the golgi apparatus membrane. It is found in the golgi apparatus. It localises to the trans-Golgi network membrane. In terms of biological role, involved in vesicular trafficking at the Golgi apparatus level. May play a role in delivery of transport vesicles containing GPI-linked proteins from the trans-Golgi network through its interaction with MACF1. Involved in endosome-to-Golgi trafficking. This chain is Golgin subfamily A member 4, found in Rattus norvegicus (Rat).